The following is a 323-amino-acid chain: MVSVNLEAKKTVDVMIEKQDELNIAVSQLSNGATIIDCGVNVDGSFKAGELYTKVCLGGLADVGISIPGDLSEKFALPSVKIKTDSPAISTLGSQKAGWSVSVGDFFALGSGPARAICKKPAETYEEIGYEDTEADLAILTLEADVLPGEDVAQYIADECNVDVKDVYLLVAPTSSLVGSIQISGRVVENGTYKMLEAIKFDVTKVKHAAGIAPIAPIDPDGLKAMGKTNDAVLFGGRTYYYVESDENDDIADVAAKLPSSAADGYGKPFFDVFKEAEFDFYKIDKGMFAPAEVVINDLTTGKIYKEGYVNVDLLKKSFGVDN.

The protein belongs to the MCH family.

The protein localises to the cytoplasm. It carries out the reaction 5,10-methenyl-5,6,7,8-tetrahydromethanopterin + H2O = N(5)-formyl-5,6,7,8-tetrahydromethanopterin + H(+). It participates in one-carbon metabolism; methanogenesis from CO(2); 5,10-methenyl-5,6,7,8-tetrahydromethanopterin from CO(2): step 3/3. Functionally, catalyzes the reversible interconversion of 5-formyl-H(4)MPT to methenyl-H(4)MPT(+). This is Methenyltetrahydromethanopterin cyclohydrolase from Methanobrevibacter smithii (strain ATCC 35061 / DSM 861 / OCM 144 / PS).